The primary structure comprises 223 residues: Endonuclease V (223 aa).

The Mg(2+) site is built by Asp-35 and Asp-103.

Belongs to the endonuclease V family. Requires Mg(2+) as cofactor.

The protein localises to the cytoplasm. The enzyme catalyses Endonucleolytic cleavage at apurinic or apyrimidinic sites to products with a 5'-phosphate.. Functionally, DNA repair enzyme involved in the repair of deaminated bases. Selectively cleaves double-stranded DNA at the second phosphodiester bond 3' to a deoxyinosine leaving behind the intact lesion on the nicked DNA. In Escherichia coli O45:K1 (strain S88 / ExPEC), this protein is Endonuclease V.